A 509-amino-acid polypeptide reads, in one-letter code: MEVLAEPRWPPGLAVMKTIDDLLRCGICFEYFNIAVIIPQCSHNYCSLCIRKFLSYKTQCPTCCVAVTEPDLRNNRLLDELVKSMNFARTHLLQFALESPPISPVSSTSKKVVVKVHNADAAQHPVKQANRLMDKFLIRETGDCVFELLGKENERKFSPQKELSTSAEIKETSLLGKPVLGLSDANGPVTPSTSTMKLDTKVSCPVCGVSIPENHINKHLDSCLSREEKKESLRSSAHKRKPLPKTVYNLLSDRDLKKKLKQYGLSVQGNKQQLIKRHQEFVHMYNAQCDALHPKSAAEIVQEIESMEKTRMRLEASKLNENVMVFTKNQTEKEIEEVHSEYRKKHQNAFQLLVDQAKKGYKKTGRVSQAAAMRTDEPAETLPSMRTDEPAETLPSMRTDEPAETLPLMRADEPAETLPSECIAQEDNVSFSDTVSVTNHFPQPQLDSPGPSEPERPDDSSSCTDILFSSDSDSCNRNDQNREVSPQQTRRTRASECVEIEPRNKRNKN.

The residue at position 1 (Met-1) is an N-acetylmethionine. The RING-type zinc finger occupies 25 to 64 (CGICFEYFNIAVIIPQCSHNYCSLCIRKFLSYKTQCPTCC). 4 positions are modified to phosphoserine: Ser-99, Ser-103, Ser-158, and Ser-164. The UBZ4-type zinc-finger motif lies at 201–228 (KVSCPVCGVSIPENHINKHLDSCLSREE). Residues Cys-204, Cys-207, His-219, and Cys-223 each coordinate Zn(2+). An LR motif motif is present at residues 232-240 (SLRSSAHKR). The region spanning 248-282 (YNLLSDRDLKKKLKQYGLSVQGNKQQLIKRHQEFV) is the SAP domain. 2 disordered regions span residues 365-401 (GRVS…RTDE) and 435-509 (VSVT…RNKN). 2 stretches are compositionally biased toward polar residues: residues 435–446 (VSVTNHFPQPQL) and 463–473 (CTDILFSSDSD). Phosphoserine is present on Ser-485. The segment covering 493–509 (RASECVEIEPRNKRNKN) has biased composition (basic and acidic residues).

This sequence belongs to the RAD18 family. As to quaternary structure, homodimer. Interacts with UBE2A and UBE2B, one homodimer binding one molecule of UBE2B. Interacts with HLTF. Interacts with SHPRH. Interacts with SPRTN; leading to enhance chromatin association of RAD18 and RAD18-mediated PCNA ubiquitination and translesion DNA synthesis. Interacts (via C-terminus and phosphorylated form) with SLF1 (via BRCT domains); this interaction is required for efficient repair of UV-induced DNA damage. Interacts with SLF2. Interacts with SMC5; this interaction is increased in a SLF1 or SLF2-dependent manner. In terms of tissue distribution, expressed in thymus, spleen, brain, and ovary.

The protein localises to the nucleus. Its subcellular location is the cytoplasm. It is found in the cytoskeleton. The protein resides in the microtubule organizing center. It localises to the centrosome. The catalysed reaction is S-ubiquitinyl-[E2 ubiquitin-conjugating enzyme]-L-cysteine + [acceptor protein]-L-lysine = [E2 ubiquitin-conjugating enzyme]-L-cysteine + N(6)-ubiquitinyl-[acceptor protein]-L-lysine.. The protein operates within protein modification; protein ubiquitination. In terms of biological role, E3 ubiquitin-protein ligase involved in postreplication repair of UV-damaged DNA. Postreplication repair functions in gap-filling of a daughter strand on replication of damaged DNA. Associates to the E2 ubiquitin conjugating enzyme UBE2B to form the UBE2B-RAD18 ubiquitin ligase complex involved in mono-ubiquitination of DNA-associated PCNA on 'Lys-164'. Has ssDNA binding activity. The sequence is that of E3 ubiquitin-protein ligase RAD18 (Rad18) from Mus musculus (Mouse).